Reading from the N-terminus, the 207-residue chain is Suppressor of IKBKE 1 (207 aa).

Coiled coils occupy residues 4 to 32 (TIDK…LIDQ) and 154 to 193 (DAIQ…SLHS). The segment at 186–207 (TSKESLHSSKRESEWNFSEKTQ) is disordered. Positions 189–199 (ESLHSSKRESE) are enriched in basic and acidic residues.

Belongs to the SIKE family. Interacts with IKBKE and TBK1 via its coiled coil region. Interaction with TBK1 is disrupted upon viral infection or TLR3 stimulation. Interacts with CDC42BPB. Associates with the STRIPAK core complex composed of PP2A catalytic and scaffolding subunits, the striatins (PP2A regulatory subunits), the striatin-associated proteins MOB4, STRIP1 and STRIP2, PDCD10 and members of the STE20 kinases, such as STK24 and STK26.

Functionally, suppressor of IKK-epsilon. Associates with the striatin-interacting phosphatase and kinase (STRIPAK) core complex, forming the extended (SIKE1:SLMAP)STRIPAK complex. The (SIKE1:SLMAP)STRIPAK complex dephosphorylates STK3 leading to the inhibition of Hippo signaling and the control of cell growth. The polypeptide is Suppressor of IKBKE 1 (sike1) (Xenopus tropicalis (Western clawed frog)).